Here is a 772-residue protein sequence, read N- to C-terminus: MAEEHFDVLTKSGEKTGVSKPRGEVHRDGDYHRAVHVWIFVETTQQLLLQLRSDDKDSWPGQWDISSAGHISAGDTSLLSAQRELEEELGVKLPKDAFEKIFVFLQECVTNDGKFINNEFNDVYLVTILHPIPLEAFTLQKEEVSAVKYVPYEEYRNFLSKEDPAYVPYDVNGEYGKLFDIIRQRCQVNTEARSLSLQKQLQRYSPVTLEAKLTELSEADQKALGLIVKAAKIMDDIFYEQVWNSNPALRDWLKDHANASKLDKLKWDYFTINKSPWSSLDENEAFLSTADSAVKLLPGATKAIAGWKGLEYRAAFPVTKPPGANFYPPDMDKMEFTLWLNGLTEEQKHAATGFFSVIKRRSEANLDASDHLASSTKKLPDSNSDLYSIPYSEIYRPFLKKASEFLQKAGDLVSSPSLKKLLHSKAEAFLSNEYYESDIAWMDLDSKLDITIGPYETYEDEIFGYKATFETFIGIRDDKATADLKLFGDNLKLLEDNLPLESVYKSTDVSAAPIRVIQLIYNSGDVKGPQTVAYNLPNDEKIVKDRGTSMVMLKNVQEAKFEHILKPIAEITISKEQRGLVDFDSFFTHTICHECCHGIGPHTITLPGGQTSTVRKELQEVHSAMEEAKADIVGLWALKFLITKGLLSKSMVESMYVSFLAGCFRSIRFGLTEAHGKGQALQFNYLYEKGAFVFHEDSTFSVDFAKIEGAVESLSHEILTIQGKGDKNAATLLLNKYCTITGPLKTALENLERVKVPVDISPTFPLAEALMN.

Over residues 1-14 (MAEEHFDVLTKSGE) the composition is skewed to basic and acidic residues. The segment at 1 to 25 (MAEEHFDVLTKSGEKTGVSKPRGEV) is disordered. The Nudix hydrolase domain occupies 30–172 (DYHRAVHVWI…DPAYVPYDVN (143 aa)). The short motif at 69–90 (GHISAGDTSLLSAQRELEEELG) is the Nudix box element. Residues Glu84 and Glu88 each coordinate Mg(2+).

The protein belongs to the Nudix hydrolase family. Requires Mg(2+) as cofactor. Mn(2+) serves as cofactor. As to expression, expressed in roots, stems and, at lower level, leaves.

Functionally, probably mediates the hydrolysis of some nucleoside diphosphate derivatives. The protein is Nudix hydrolase 3 (NUDT3) of Arabidopsis thaliana (Mouse-ear cress).